Consider the following 346-residue polypeptide: Annexin A1 (346 aa).

Alanine 2 carries the post-translational modification N-acetylalanine. Phosphoserine; by TRPM7 is present on serine 5. Glutamine 19 is covalently cross-linked (Isoglutamyl lysine isopeptide (Gln-Lys) (interchain with K-?)). Tyrosine 21 carries the phosphotyrosine; by EGFR modification. Phosphoserine occurs at positions 34 and 37. Threonine 41 bears the Phosphothreonine mark. Annexin repeat units follow at residues 42-113, 114-185, 197-269, and 273-344; these read FNPS…ALLK, TPAQ…SLAK, DLAD…VIVK, and SQPM…ALCG. An N6-acetyllysine modification is found at lysine 58. Glycine 59, valine 60, glutamate 62, lysine 97, leucine 100, glutamate 105, methionine 127, glycine 129, glycine 131, threonine 132, and glutamate 134 together coordinate Ca(2+). Threonine 136 is subject to Phosphothreonine. The Ca(2+) site is built by aspartate 171, glycine 210, and arginine 213. Residue lysine 214 forms a Glycyl lysine isopeptide (Lys-Gly) (interchain with G-Cter in SUMO1); alternate linkage. Residue lysine 214 forms a Glycyl lysine isopeptide (Lys-Gly) (interchain with G-Cter in SUMO2); alternate linkage. Glycine 215 serves as a coordination point for Ca(2+). N6-acetyllysine is present on lysine 239. 3 residues coordinate Ca(2+): aspartate 253, glutamate 255, and leucine 256. Lysine 257 is covalently cross-linked (Glycyl lysine isopeptide (Lys-Gly) (interchain with G-Cter in SUMO1)). Positions 261, 286, 288, and 290 each coordinate Ca(2+). Lysine 312 is subject to N6-acetyllysine. A disulfide bridge links cysteine 324 with cysteine 343. The Ca(2+) site is built by leucine 328, glutamate 330, and threonine 331. A Glycyl lysine isopeptide (Lys-Gly) (interchain with G-Cter in SUMO1) cross-link involves residue lysine 332. Glutamate 336 lines the Ca(2+) pocket.

This sequence belongs to the annexin family. In terms of assembly, homodimer; non-covalently linked. Homodimer; linked by transglutamylation. Homodimers linked by transglutamylation are observed in placenta, but not in other tissues. Interacts with S100A11. Heterotetramer, formed by two molecules each of S100A11 and ANXA1. Interacts with DYSF. Interacts with EGFR. Phosphorylated by protein kinase C, EGFR and TRPM7. Phosphorylated in response to EGF treatment. Post-translationally, sumoylated. In terms of processing, proteolytically cleaved by cathepsin CTSG to release the active N-terminal peptide Ac2-26. As to expression, detected on surface epithelia and mucosal glands in nasal cavity, trachea, bronchi and bronchioles. Detected in blood vessel endothelial cells. Detected in neutrophils (at protein level).

The protein localises to the nucleus. The protein resides in the cytoplasm. Its subcellular location is the cell projection. It localises to the cilium. It is found in the basolateral cell membrane. The protein localises to the lateral cell membrane. The protein resides in the cell membrane. Its subcellular location is the apical cell membrane. It localises to the membrane. It is found in the endosome membrane. The protein localises to the secreted. The protein resides in the extracellular space. Its subcellular location is the early endosome. It localises to the cytoplasmic vesicle membrane. It is found in the extracellular exosome. The protein localises to the cytoplasmic vesicle. The protein resides in the secretory vesicle lumen. Its subcellular location is the phagocytic cup. Plays important roles in the innate immune response as effector of glucocorticoid-mediated responses and regulator of the inflammatory process. Has anti-inflammatory activity. Plays a role in glucocorticoid-mediated down-regulation of the early phase of the inflammatory response. Contributes to the adaptive immune response by enhancing signaling cascades that are triggered by T-cell activation, regulates differentiation and proliferation of activated T-cells. Promotes the differentiation of T-cells into Th1 cells and negatively regulates differentiation into Th2 cells. Has no effect on unstimulated T-cells. Negatively regulates hormone exocytosis via activation of the formyl peptide receptors and reorganization of the actin cytoskeleton. Has high affinity for Ca(2+) and can bind up to eight Ca(2+) ions. Displays Ca(2+)-dependent binding to phospholipid membranes. Plays a role in the formation of phagocytic cups and phagosomes. Plays a role in phagocytosis by mediating the Ca(2+)-dependent interaction between phagosomes and the actin cytoskeleton. In terms of biological role, functions at least in part by activating the formyl peptide receptors and downstream signaling cascades. Promotes chemotaxis of granulocytes and monocytes via activation of the formyl peptide receptors. Promotes rearrangement of the actin cytoskeleton, cell polarization and cell migration. Promotes resolution of inflammation and wound healing. Acts via neutrophil N-formyl peptide receptors to enhance the release of CXCL2. The chain is Annexin A1 (ANXA1) from Bos taurus (Bovine).